Consider the following 43-residue polypeptide: Defensin, isoforms B and C (43 aa).

3 disulfides stabilise this stretch: Cys-3–Cys-34, Cys-20–Cys-40, and Cys-24–Cys-42.

Belongs to the invertebrate defensin family. Type 1 subfamily.

Its subcellular location is the secreted. Involved in anti Gram-positive activity of immune hemolymph of Z.atratus. The polypeptide is Defensin, isoforms B and C (Zophobas atratus (Giant mealworm beetle)).